The sequence spans 496 residues: Cytochrome P450 71D181 (496 aa).

A helical; Signal-anchor for type II membrane protein transmembrane segment spans residues 1–21 (MDISISWVAIILVISSYFIFM). Cysteine 435 contacts heme. The disordered stretch occupies residues 471–496 (MSETPGLSGPRKNPLIMVPTIHNPTS).

The protein belongs to the cytochrome P450 family. The cofactor is heme. In terms of tissue distribution, expressed at low levels in flowers, leaves and stems.

It is found in the membrane. It carries out the reaction alpha-terpinene + 2 reduced [NADPH--hemoprotein reductase] + 2 O2 = carvacrol + 2 oxidized [NADPH--hemoprotein reductase] + 3 H2O + 2 H(+). The enzyme catalyses gamma-terpinene + 2 reduced [NADPH--hemoprotein reductase] + 2 O2 = carvacrol + 2 oxidized [NADPH--hemoprotein reductase] + 3 H2O + 2 H(+). It catalyses the reaction (4S)-limonene + reduced [NADPH--hemoprotein reductase] + O2 = (1S,5R)-carveol + oxidized [NADPH--hemoprotein reductase] + H2O + H(+). The catalysed reaction is (4R)-limonene + reduced [NADPH--hemoprotein reductase] + O2 = (1R,5S)-carveol + oxidized [NADPH--hemoprotein reductase] + H2O + H(+). It participates in secondary metabolite biosynthesis; terpenoid biosynthesis. Functionally, involved in the biosynthesis of phenolic monoterpenes natural products thymol and carvacrol which have a broad range of biological activities acting as antimicrobial compounds, insecticides, antioxidants and pharmaceutical agents. Catalyzes the C2-hydroxylation of gamma-terpinene and alpha-terpinene to produce carvacrol. Also mediates the C6-hydroxylation of (4S)-limonene and (4R)-limonene to form carveol. The protein is Cytochrome P450 71D181 of Origanum vulgare (Wild marjoram).